A 494-amino-acid chain; its full sequence is Aspartyl/glutamyl-tRNA(Asn/Gln) amidotransferase subunit B (494 aa).

It belongs to the GatB/GatE family. GatB subfamily. As to quaternary structure, heterotrimer of A, B and C subunits.

The enzyme catalyses L-glutamyl-tRNA(Gln) + L-glutamine + ATP + H2O = L-glutaminyl-tRNA(Gln) + L-glutamate + ADP + phosphate + H(+). The catalysed reaction is L-aspartyl-tRNA(Asn) + L-glutamine + ATP + H2O = L-asparaginyl-tRNA(Asn) + L-glutamate + ADP + phosphate + 2 H(+). In terms of biological role, allows the formation of correctly charged Asn-tRNA(Asn) or Gln-tRNA(Gln) through the transamidation of misacylated Asp-tRNA(Asn) or Glu-tRNA(Gln) in organisms which lack either or both of asparaginyl-tRNA or glutaminyl-tRNA synthetases. The reaction takes place in the presence of glutamine and ATP through an activated phospho-Asp-tRNA(Asn) or phospho-Glu-tRNA(Gln). The protein is Aspartyl/glutamyl-tRNA(Asn/Gln) amidotransferase subunit B of Rhodopseudomonas palustris (strain BisB18).